We begin with the raw amino-acid sequence, 475 residues long: Deoxyguanosinetriphosphate triphosphohydrolase-like protein (475 aa).

Residues 118-272 enclose the HD domain; the sequence is RLTHTLEVAQ…MDLSDDIAYS (155 aa).

This sequence belongs to the dGTPase family. Type 2 subfamily.

This is Deoxyguanosinetriphosphate triphosphohydrolase-like protein (dgt) from Bifidobacterium longum (strain NCC 2705).